Reading from the N-terminus, the 156-residue chain is Snaclec A11 (156 aa).

Residues 1 to 23 (MGRSISVSFGLLVVFLSLSGTGA) form the signal peptide. Disulfide bonds link cysteine 27-cysteine 38, cysteine 55-cysteine 154, and cysteine 129-cysteine 146. The 122-residue stretch at 34–155 (YDQHCYQAVD…CGQPYRFTCE (122 aa)) folds into the C-type lectin domain.

It belongs to the snaclec family. Heterodimer; disulfide-linked. In terms of tissue distribution, expressed by the venom gland.

The protein localises to the secreted. Its function is as follows. Interferes with one step of hemostasis (modulation of platelet aggregation, or coagulation cascade, for example). This chain is Snaclec A11, found in Macrovipera lebetinus (Levantine viper).